Here is a 398-residue protein sequence, read N- to C-terminus: S-adenosylmethionine synthase (398 aa).

Histidine 16 contacts ATP. Aspartate 18 is a Mg(2+) binding site. Glutamate 51 provides a ligand contact to K(+). Glutamate 64 and glutamine 108 together coordinate L-methionine. Residues 108–118 (QSADIAQGVDA) form a flexible loop region. ATP-binding positions include 176-178 (DSK), 242-243 (KF), aspartate 251, 257-258 (RK), alanine 274, and lysine 278. Aspartate 251 contributes to the L-methionine binding site. L-methionine is bound at residue lysine 282.

Belongs to the AdoMet synthase family. Homotetramer; dimer of dimers. It depends on Mg(2+) as a cofactor. The cofactor is K(+).

It is found in the cytoplasm. It catalyses the reaction L-methionine + ATP + H2O = S-adenosyl-L-methionine + phosphate + diphosphate. The protein operates within amino-acid biosynthesis; S-adenosyl-L-methionine biosynthesis; S-adenosyl-L-methionine from L-methionine: step 1/1. Functionally, catalyzes the formation of S-adenosylmethionine (AdoMet) from methionine and ATP. The overall synthetic reaction is composed of two sequential steps, AdoMet formation and the subsequent tripolyphosphate hydrolysis which occurs prior to release of AdoMet from the enzyme. The chain is S-adenosylmethionine synthase from Nitrobacter hamburgensis (strain DSM 10229 / NCIMB 13809 / X14).